The sequence spans 328 residues: Malate dehydrogenase 1 (328 aa).

12-18 (GAAGQIA) contacts NAD(+). 2 residues coordinate substrate: arginine 93 and arginine 99. Residues asparagine 106, glutamine 113, and 130–132 (VGN) each bind NAD(+). Residues asparagine 132 and arginine 163 each contribute to the substrate site. Histidine 188 (proton acceptor) is an active-site residue.

The protein belongs to the LDH/MDH superfamily. MDH type 2 family.

The catalysed reaction is (S)-malate + NAD(+) = oxaloacetate + NADH + H(+). In terms of biological role, catalyzes the reversible oxidation of malate to oxaloacetate. The protein is Malate dehydrogenase 1 of Burkholderia vietnamiensis (strain G4 / LMG 22486) (Burkholderia cepacia (strain R1808)).